We begin with the raw amino-acid sequence, 71 residues long: Allergen Art v 2 (71 aa).

Glycosylated. High-mannose oligosaccharides (Man(5-9)GlcNAc(2)).

The protein is Allergen Art v 2 of Artemisia vulgaris (Mugwort).